Reading from the N-terminus, the 68-residue chain is MARITVDDCLDRIQNRFDLTLAAAYRARQVASGASAFVEPGRHKPTVIALREIAAGHVGKEVLNRGKA.

It belongs to the RNA polymerase subunit omega family. As to quaternary structure, the RNAP catalytic core consists of 2 alpha, 1 beta, 1 beta' and 1 omega subunit. When a sigma factor is associated with the core the holoenzyme is formed, which can initiate transcription.

It carries out the reaction RNA(n) + a ribonucleoside 5'-triphosphate = RNA(n+1) + diphosphate. In terms of biological role, promotes RNA polymerase assembly. Latches the N- and C-terminal regions of the beta' subunit thereby facilitating its interaction with the beta and alpha subunits. In Chromobacterium violaceum (strain ATCC 12472 / DSM 30191 / JCM 1249 / CCUG 213 / NBRC 12614 / NCIMB 9131 / NCTC 9757 / MK), this protein is DNA-directed RNA polymerase subunit omega.